The following is an 801-amino-acid chain: Leucine--tRNA ligase (801 aa).

The short motif at 40–51 (PYPSGAGLHVGH) is the 'HIGH' region element. The short motif at 576–580 (KMSKS) is the 'KMSKS' region element. Position 579 (Lys579) interacts with ATP.

The protein belongs to the class-I aminoacyl-tRNA synthetase family.

The protein resides in the cytoplasm. It catalyses the reaction tRNA(Leu) + L-leucine + ATP = L-leucyl-tRNA(Leu) + AMP + diphosphate. This is Leucine--tRNA ligase from Exiguobacterium sibiricum (strain DSM 17290 / CCUG 55495 / CIP 109462 / JCM 13490 / 255-15).